Reading from the N-terminus, the 216-residue chain is uncharacterized protein (216 aa).

The region spanning leucine 8 to leucine 63 is the HTH cro/C1-type domain. Positions alanine 19 to threonine 38 form a DNA-binding region, H-T-H motif.

This is an uncharacterized protein from Coxiella burnetii (strain RSA 493 / Nine Mile phase I).